The following is an 87-amino-acid chain: uncharacterized protein (87 aa).

This is an uncharacterized protein from Dictyostelium discoideum (Social amoeba).